Consider the following 978-residue polypeptide: Retinoblastoma-related protein 2 (978 aa).

The interval 385 to 585 (TPVTSAMTTA…EKGSSLYNSL (201 aa)) is domain A. The segment at 385 to 832 (TPVTSAMTTA…NQVFVPTVKP (448 aa)) is pocket. A spacer region spans residues 586-704 (VVARPSLSTE…PVSGNEKCAV (119 aa)). A disordered region spans residues 616 to 645 (QSIHPDGLPPTPSKRWPSAGPDGNCYPQSP). The interval 705–832 (VGVQIFFSKI…NQVFVPTVKP (128 aa)) is domain B. Disordered stretches follow at residues 841-878 (STRP…SSSH) and 947-978 (VAGS…KTDS). The segment covering 850 to 864 (TNSQIPGSPKSSPFS) has biased composition (polar residues). The span at 958-971 (SASSDPAAAFSPLS) shows a compositional bias: low complexity.

The protein belongs to the retinoblastoma protein (RB) family.

The protein resides in the nucleus. Its function is as follows. Regulator of biological processes that recruits a histone deacetylase to control gene transcription. May play a role in the entry into mitosis, negatively regulating the cell proliferation. Formation of stable complexes with geminiviridae replication-associated proteins may create a cellular environment which favors viral DNA replication. This chain is Retinoblastoma-related protein 2 (RBR2), found in Oryza sativa subsp. japonica (Rice).